A 517-amino-acid polypeptide reads, in one-letter code: Serine hydroxymethyltransferase 2, mitochondrial (517 aa).

The N-terminal 29 residues, 1–29 (MALALRRLSSSVKKPISLLSSNGGSLRFM), are a transit peptide targeting the mitochondrion. Residue Ser82 coordinates L-serine. Residues Ser82, Tyr102, Glu104, Tyr112, 148-150 (SGS), and His177 contribute to the pemetrexed site. L-serine-binding residues include Glu104 and Tyr112. A methotrexate-binding site is contributed by Glu104. 184 to 186 (TDT) provides a ligand contact to methotrexate. Residues Ser232 and His260 each coordinate pemetrexed. Residues His260 and Lys286 each contribute to the L-serine site. Lys286 is subject to N6-(pyridoxal phosphate)lysine. Gly331 lines the pemetrexed pocket. Lys414 contacts methotrexate. Arg430 provides a ligand contact to L-serine. Arg430 is a binding site for pemetrexed.

It belongs to the SHMT family. As to quaternary structure, homotetramer. Requires pyridoxal 5'-phosphate as cofactor. Ubiquitous. Mainly expressed in the shoot apical meristem and roots. Also detected in the leaf vasculature, especially in the protoxylem and adjacent cell layers.

The protein resides in the mitochondrion. The catalysed reaction is (6R)-5,10-methylene-5,6,7,8-tetrahydrofolate + glycine + H2O = (6S)-5,6,7,8-tetrahydrofolate + L-serine. It functions in the pathway one-carbon metabolism; tetrahydrofolate interconversion. With respect to regulation, inhibited by the antifolate drugs methotrexate and pemetrexed. Functions outside the photorespiratory pathway in catalyzing the interconversion of serine and glycine with the conversion of tetrahydrofolate (THF) into 5,10-methylene-THF. This is Serine hydroxymethyltransferase 2, mitochondrial from Arabidopsis thaliana (Mouse-ear cress).